The primary structure comprises 598 residues: Vanadium-dependent bromoperoxidase (598 aa).

Residues Phe-361, Gln-363, Asp-365, Asp-368, and Gln-370 each coordinate Ca(2+). 2 residues coordinate vanadate: Lys-400 and Arg-408. His-480 is a catalytic residue. Vanadate-binding residues include Ser-485, Gly-486, His-487, Arg-547, and His-553. His-487 is a catalytic residue.

The protein belongs to the vanadium-dependent haloperoxidase family. Homododecamer. Requires Ca(2+) as cofactor. The cofactor is vanadate.

The enzyme catalyses RH + Br(-) + H2O2 = RBr + 2 H2O.. Catalyzes the halogenation of organic substrates in the presence of hydrogen peroxide. The protein is Vanadium-dependent bromoperoxidase of Corallina officinalis (Coral seaweed).